The following is a 184-amino-acid chain: Large ribosomal subunit protein uL5 (184 aa).

Belongs to the universal ribosomal protein uL5 family. In terms of assembly, part of the 50S ribosomal subunit; part of the 5S rRNA/L5/L18/L25 subcomplex. Contacts the 5S rRNA and the P site tRNA. Forms a bridge to the 30S subunit in the 70S ribosome.

In terms of biological role, this is one of the proteins that bind and probably mediate the attachment of the 5S RNA into the large ribosomal subunit, where it forms part of the central protuberance. In the 70S ribosome it contacts protein S13 of the 30S subunit (bridge B1b), connecting the 2 subunits; this bridge is implicated in subunit movement. Contacts the P site tRNA; the 5S rRNA and some of its associated proteins might help stabilize positioning of ribosome-bound tRNAs. The protein is Large ribosomal subunit protein uL5 of Thermotoga maritima (strain ATCC 43589 / DSM 3109 / JCM 10099 / NBRC 100826 / MSB8).